Consider the following 193-residue polypeptide: GTP cyclohydrolase 1 (193 aa).

3 residues coordinate Zn(2+): C83, H86, and C154.

Belongs to the GTP cyclohydrolase I family. As to quaternary structure, homomer.

It carries out the reaction GTP + H2O = 7,8-dihydroneopterin 3'-triphosphate + formate + H(+). The protein operates within cofactor biosynthesis; 7,8-dihydroneopterin triphosphate biosynthesis; 7,8-dihydroneopterin triphosphate from GTP: step 1/1. This is GTP cyclohydrolase 1 from Porphyromonas gingivalis (strain ATCC 33277 / DSM 20709 / CIP 103683 / JCM 12257 / NCTC 11834 / 2561).